A 226-amino-acid chain; its full sequence is Cobalt transport protein CbiM 1 (226 aa).

6 consecutive transmembrane segments (helical) span residues 6-26, 43-63, 75-95, 107-127, 135-155, and 181-201; these read GFLP…VVAY, MLLG…MPSV, LGAI…VLLF, TLGA…AAVF, FPFG…TYVT, and VFAL…VVVM.

Belongs to the CbiM family. Forms an energy-coupling factor (ECF) transporter complex composed of an ATP-binding protein (A component, CbiO), a transmembrane protein (T component, CbiQ) and 2 possible substrate-capture proteins (S components, CbiM and CbiN) of unknown stoichimetry.

The protein localises to the cell inner membrane. It participates in cofactor biosynthesis; adenosylcobalamin biosynthesis. Part of the energy-coupling factor (ECF) transporter complex CbiMNOQ involved in cobalt import. The polypeptide is Cobalt transport protein CbiM 1 (cbim1) (Pelobacter propionicus (strain DSM 2379 / NBRC 103807 / OttBd1)).